The primary structure comprises 176 residues: Interleukin-7 (176 aa).

An N-terminal signal peptide occupies residues 1–25 (MFHVSFRYIFGIPPLILVLLPVASS). 3 disulfide bridges follow: Cys-27-Cys-165, Cys-58-Cys-153, and Cys-71-Cys-116. 3 N-linked (GlcNAc...) asparagine glycosylation sites follow: Asn-94, Asn-115, and Asn-140. The tract at residues 118–143 (SKGKGRKPPSLSEAQPTKNLEENKSS) is disordered.

This sequence belongs to the IL-7/IL-9 family. As to quaternary structure, interacts with IL7R and CSF2RG.

The protein resides in the secreted. Hematopoietic cytokine that plays an essential role in the development, expansion, and survival of naive and memory T-cells and B-cells thereby regulating the number of mature lymphocytes and maintaining lymphoid homeostasis. Mechanistically, exerts its biological effects through a receptor composed of IL7RA subunit and the cytokine receptor common subunit gamma/CSF2RG. Binding to the receptor leads to activation of various kinases including JAK1 or JAK3 depending on the cell type and subsequently propagation of signals through activation of several downstream signaling pathways including the PI3K/Akt/mTOR or the JAK-STAT5. In Bos taurus (Bovine), this protein is Interleukin-7 (IL7).